Here is a 441-residue protein sequence, read N- to C-terminus: Gluconate 2-dehydrogenase cytochrome c subunit (441 aa).

Positions 1 to 19 are cleaved as a signal peptide; the sequence is MMKSILALVLGTLSFAALA. Cytochrome c domains are found at residues 26 to 129, 173 to 289, and 312 to 403; these read ALVK…MHGV, PVLA…KSLG, and DDSQ…RGSW. C40, C43, H44, C188, C191, H192, C325, C328, and H329 together coordinate heme c.

As to quaternary structure, heterotrimer. It depends on FAD as a cofactor. In terms of processing, binds 3 heme c groupd covalently per subunit.

The protein resides in the cell membrane. It carries out the reaction D-gluconate + A = 2-dehydro-D-gluconate + AH2. Functionally, part of the heterotrimer that catalyzes the conversion of D-gluconate to 2-dehydro-D-gluconate. The protein is Gluconate 2-dehydrogenase cytochrome c subunit of Pantoea cypripedii (Pectobacterium cypripedii).